A 239-amino-acid polypeptide reads, in one-letter code: Phosphoribosylaminoimidazole-succinocarboxamide synthase (239 aa).

The protein belongs to the SAICAR synthetase family.

It catalyses the reaction 5-amino-1-(5-phospho-D-ribosyl)imidazole-4-carboxylate + L-aspartate + ATP = (2S)-2-[5-amino-1-(5-phospho-beta-D-ribosyl)imidazole-4-carboxamido]succinate + ADP + phosphate + 2 H(+). The protein operates within purine metabolism; IMP biosynthesis via de novo pathway; 5-amino-1-(5-phospho-D-ribosyl)imidazole-4-carboxamide from 5-amino-1-(5-phospho-D-ribosyl)imidazole-4-carboxylate: step 1/2. The protein is Phosphoribosylaminoimidazole-succinocarboxamide synthase of Shouchella clausii (strain KSM-K16) (Alkalihalobacillus clausii).